We begin with the raw amino-acid sequence, 114 residues long: Ribonuclease P protein component (114 aa).

It belongs to the RnpA family. Consists of a catalytic RNA component (M1 or rnpB) and a protein subunit.

It catalyses the reaction Endonucleolytic cleavage of RNA, removing 5'-extranucleotides from tRNA precursor.. RNaseP catalyzes the removal of the 5'-leader sequence from pre-tRNA to produce the mature 5'-terminus. It can also cleave other RNA substrates such as 4.5S RNA. The protein component plays an auxiliary but essential role in vivo by binding to the 5'-leader sequence and broadening the substrate specificity of the ribozyme. In Limosilactobacillus fermentum (strain NBRC 3956 / LMG 18251) (Lactobacillus fermentum), this protein is Ribonuclease P protein component.